The primary structure comprises 269 residues: 4-hydroxy-tetrahydrodipicolinate reductase (269 aa).

Residues 8 to 13 and E34 each bind NAD(+); that span reads GAAGRM. R35 contributes to the NADP(+) binding site. Residues 98 to 100 and 122 to 125 each bind NAD(+); these read GTT and APNY. The Proton donor/acceptor role is filled by H155. H156 is a (S)-2,3,4,5-tetrahydrodipicolinate binding site. The active-site Proton donor is K159. 165–166 is a binding site for (S)-2,3,4,5-tetrahydrodipicolinate; it reads GT.

Belongs to the DapB family.

The protein localises to the cytoplasm. The enzyme catalyses (S)-2,3,4,5-tetrahydrodipicolinate + NAD(+) + H2O = (2S,4S)-4-hydroxy-2,3,4,5-tetrahydrodipicolinate + NADH + H(+). It carries out the reaction (S)-2,3,4,5-tetrahydrodipicolinate + NADP(+) + H2O = (2S,4S)-4-hydroxy-2,3,4,5-tetrahydrodipicolinate + NADPH + H(+). It participates in amino-acid biosynthesis; L-lysine biosynthesis via DAP pathway; (S)-tetrahydrodipicolinate from L-aspartate: step 4/4. Its function is as follows. Catalyzes the conversion of 4-hydroxy-tetrahydrodipicolinate (HTPA) to tetrahydrodipicolinate. This is 4-hydroxy-tetrahydrodipicolinate reductase from Vibrio cholerae serotype O1 (strain ATCC 39315 / El Tor Inaba N16961).